Here is a 67-residue protein sequence, read N- to C-terminus: ATP synthase F(0) complex subunit 8 (67 aa).

The helical transmembrane segment at 8 to 24 (TWFINIVSMILTLFIVF) threads the bilayer. At Lys54 the chain carries N6-acetyllysine; alternate. Position 54 is an N6-succinyllysine; alternate (Lys54). Lys57 bears the N6-acetyllysine mark.

Belongs to the ATPase protein 8 family. In terms of assembly, component of the ATP synthase complex composed at least of ATP5F1A/subunit alpha, ATP5F1B/subunit beta, ATP5MC1/subunit c (homooctomer), MT-ATP6/subunit a, MT-ATP8/subunit 8, ATP5ME/subunit e, ATP5MF/subunit f, ATP5MG/subunit g, ATP5MK/subunit k, ATP5MJ/subunit j, ATP5F1C/subunit gamma, ATP5F1D/subunit delta, ATP5F1E/subunit epsilon, ATP5PF/subunit F6, ATP5PB/subunit b, ATP5PD/subunit d, ATP5PO/subunit OSCP. ATP synthase complex consists of a soluble F(1) head domain (subunits alpha(3) and beta(3)) - the catalytic core - and a membrane F(0) domain - the membrane proton channel (subunits c, a, 8, e, f, g, k and j). These two domains are linked by a central stalk (subunits gamma, delta, and epsilon) rotating inside the F1 region and a stationary peripheral stalk (subunits F6, b, d, and OSCP). Interacts with PRICKLE3.

The protein localises to the mitochondrion membrane. Functionally, subunit 8, of the mitochondrial membrane ATP synthase complex (F(1)F(0) ATP synthase or Complex V) that produces ATP from ADP in the presence of a proton gradient across the membrane which is generated by electron transport complexes of the respiratory chain. ATP synthase complex consist of a soluble F(1) head domain - the catalytic core - and a membrane F(1) domain - the membrane proton channel. These two domains are linked by a central stalk rotating inside the F(1) region and a stationary peripheral stalk. During catalysis, ATP synthesis in the catalytic domain of F(1) is coupled via a rotary mechanism of the central stalk subunits to proton translocation. In vivo, can only synthesize ATP although its ATP hydrolase activity can be activated artificially in vitro. Part of the complex F(0) domain. This chain is ATP synthase F(0) complex subunit 8, found in Equus asinus (Donkey).